The primary structure comprises 102 residues: Small ribosomal subunit protein uS10 (102 aa).

The protein belongs to the universal ribosomal protein uS10 family. In terms of assembly, part of the 30S ribosomal subunit.

In terms of biological role, involved in the binding of tRNA to the ribosomes. The protein is Small ribosomal subunit protein uS10 of Bifidobacterium adolescentis (strain ATCC 15703 / DSM 20083 / NCTC 11814 / E194a).